We begin with the raw amino-acid sequence, 293 residues long: Phosphoribosylaminoimidazole-succinocarboxamide synthase (293 aa).

Belongs to the SAICAR synthetase family.

It catalyses the reaction 5-amino-1-(5-phospho-D-ribosyl)imidazole-4-carboxylate + L-aspartate + ATP = (2S)-2-[5-amino-1-(5-phospho-beta-D-ribosyl)imidazole-4-carboxamido]succinate + ADP + phosphate + 2 H(+). Its pathway is purine metabolism; IMP biosynthesis via de novo pathway; 5-amino-1-(5-phospho-D-ribosyl)imidazole-4-carboxamide from 5-amino-1-(5-phospho-D-ribosyl)imidazole-4-carboxylate: step 1/2. This is Phosphoribosylaminoimidazole-succinocarboxamide synthase from Bordetella petrii (strain ATCC BAA-461 / DSM 12804 / CCUG 43448).